A 379-amino-acid chain; its full sequence is Cytochrome b (379 aa).

A run of 4 helical transmembrane segments spans residues 34 to 54 (FGSL…LLAM), 78 to 99 (WLIR…YLHI), 114 to 134 (WNTG…GYVL), and 179 to 199 (FFAL…IHLT). The heme b site is built by His-84 and His-98. His-183 and His-197 together coordinate heme b. Residue His-202 coordinates a ubiquinone. The next 4 membrane-spanning stretches (helical) occupy residues 227–247 (LKDA…AFFS), 289–309 (LGGV…PFLH), 321–341 (LSQI…WIGS), and 348–368 (FIII…VLFP).

Belongs to the cytochrome b family. In terms of assembly, the cytochrome bc1 complex contains 11 subunits: 3 respiratory subunits (MT-CYB, CYC1 and UQCRFS1), 2 core proteins (UQCRC1 and UQCRC2) and 6 low-molecular weight proteins (UQCRH/QCR6, UQCRB/QCR7, UQCRQ/QCR8, UQCR10/QCR9, UQCR11/QCR10 and a cleavage product of UQCRFS1). This cytochrome bc1 complex then forms a dimer. Heme b serves as cofactor.

The protein resides in the mitochondrion inner membrane. Functionally, component of the ubiquinol-cytochrome c reductase complex (complex III or cytochrome b-c1 complex) that is part of the mitochondrial respiratory chain. The b-c1 complex mediates electron transfer from ubiquinol to cytochrome c. Contributes to the generation of a proton gradient across the mitochondrial membrane that is then used for ATP synthesis. This Rhea americana (Greater rhea) protein is Cytochrome b (MT-CYB).